The primary structure comprises 233 residues: Antilisterial bacteriocin subtilosin biosynthesis protein AlbG (233 aa).

6 helical membrane passes run 7 to 27 (FTLL…VQAV), 46 to 66 (GLLA…LHYV), 116 to 136 (TYVM…FEIV), 145 to 165 (TPPA…LFCM), 176 to 198 (GSLF…MLSF), and 203 to 220 (LLFL…SFIY).

Its subcellular location is the cell membrane. Functionally, involved in the production of the bacteriocin subtilosin. In Bacillus subtilis (strain 168), this protein is Antilisterial bacteriocin subtilosin biosynthesis protein AlbG (albG).